The sequence spans 367 residues: tRNA-specific 2-thiouridylase MnmA (367 aa).

ATP contacts are provided by residues 13–20 (GLSGGVDS) and Met39. The tract at residues 99–101 (NPD) is interaction with target base in tRNA. Cys104 acts as the Nucleophile in catalysis. Cysteines 104 and 200 form a disulfide. An ATP-binding site is contributed by Gly128. The interaction with tRNA stretch occupies residues 150 to 152 (KDQ). The active-site Cysteine persulfide intermediate is Cys200. The tract at residues 307–308 (RY) is interaction with tRNA.

Belongs to the MnmA/TRMU family.

The protein localises to the cytoplasm. It catalyses the reaction S-sulfanyl-L-cysteinyl-[protein] + uridine(34) in tRNA + AH2 + ATP = 2-thiouridine(34) in tRNA + L-cysteinyl-[protein] + A + AMP + diphosphate + H(+). Its function is as follows. Catalyzes the 2-thiolation of uridine at the wobble position (U34) of tRNA, leading to the formation of s(2)U34. This is tRNA-specific 2-thiouridylase MnmA from Neisseria meningitidis serogroup A / serotype 4A (strain DSM 15465 / Z2491).